Consider the following 162-residue polypeptide: Phosphopantetheine adenylyltransferase (162 aa).

Substrate is bound at residue S11. ATP contacts are provided by residues 11 to 12 and H19; that span reads SF. Substrate contacts are provided by K43, V76, and R90. Residues 91–93, E101, and 126–132 contribute to the ATP site; these read GLR and HLYISSS.

The protein belongs to the bacterial CoaD family. As to quaternary structure, homohexamer. It depends on Mg(2+) as a cofactor.

The protein resides in the cytoplasm. The enzyme catalyses (R)-4'-phosphopantetheine + ATP + H(+) = 3'-dephospho-CoA + diphosphate. It functions in the pathway cofactor biosynthesis; coenzyme A biosynthesis; CoA from (R)-pantothenate: step 4/5. Functionally, reversibly transfers an adenylyl group from ATP to 4'-phosphopantetheine, yielding dephospho-CoA (dPCoA) and pyrophosphate. This is Phosphopantetheine adenylyltransferase from Streptococcus pneumoniae (strain Taiwan19F-14).